The chain runs to 421 residues: Meiotic fizzy-related protein 1 (421 aa).

The disordered stretch occupies residues D79–R107. Polar residues predominate over residues Y86–M98. WD repeat units follow at residues K123–L160, G164–S203, G206–K246, V247–K286, E289–K331, D333–N374, and A377–E416.

The protein belongs to the WD repeat CDC20/Fizzy family. Interacts with mes1.

The protein localises to the nucleus. Functionally, meiosis-specific activator of the anaphase promoting complex/cyclosome (APC/C). Involved in cdc13 degradation. In Schizosaccharomyces pombe (strain 972 / ATCC 24843) (Fission yeast), this protein is Meiotic fizzy-related protein 1 (mfr1).